The chain runs to 715 residues: Myosin light chain kinase 3 (715 aa).

Positions 67 to 114 (VTLPNDPSSQHSPEAHTGASEPLKPVSAGESSKALQKAKEISVKSSEP) are disordered. The region spanning 404 to 659 (VNPVEVLGGG…ASGCMKHSWL (256 aa)) is the Protein kinase domain. ATP is bound by residues 410–418 (LGGGRFGQV) and Lys433. The Proton acceptor role is filled by Asp525.

This sequence belongs to the protein kinase superfamily. CAMK Ser/Thr protein kinase family. Mg(2+) serves as cofactor. Phosphorylated on serine residues.

Its subcellular location is the cytoplasm. The catalysed reaction is L-seryl-[myosin light chain] + ATP = O-phospho-L-seryl-[myosin light chain] + ADP + H(+). It carries out the reaction L-threonyl-[myosin light chain] + ATP = O-phospho-L-threonyl-[myosin light chain] + ADP + H(+). Its function is as follows. Kinase that phosphorylates MYL2 in vitro. Increases cardiomyocyte contractility. Required for sarcomere formation in the developing heart. The polypeptide is Myosin light chain kinase 3 (mylk3) (Danio rerio (Zebrafish)).